The following is a 178-amino-acid chain: S-alkylcysteine N-acetyltransferase (178 aa).

Residues 4 to 163 enclose the N-acetyltransferase domain; that stretch reads DIFRLATVED…IGVMMHKVLI (160 aa).

It belongs to the acetyltransferase family.

The enzyme catalyses an S-substituted L-cysteine + acetyl-CoA = an N-acetyl-L-cysteine-S-conjugate + CoA + H(+). It carries out the reaction S-benzyl-L-cysteine + acetyl-CoA = N-acetyl-S-benzyl-L-cysteine + CoA + H(+). The catalysed reaction is S-methyl-L-cysteine + acetyl-CoA = N-acetyl-S-methyl-L-cysteine + CoA + H(+). Its pathway is amino-acid metabolism. In terms of biological role, involved in a cysteine salvage pathway from S-alkylcysteine. Catalyzes the first step in this pathway, i.e. the amine acetylation of an S-alkylcysteine with a preference for S-benzyl-L-cysteine over S-methyl-L-cysteine. This pathway is likely important in the catabolism of alkylated cysteine generated by proteolysis of alkylated glutathione formed in the detoxification of a wide range of electrophiles. The chain is S-alkylcysteine N-acetyltransferase from Bacillus subtilis (strain 168).